A 602-amino-acid chain; its full sequence is Bifunctional lycopene cyclase/phytoene synthase (602 aa).

The segment at Met1–Gln241 is lycopene beta-cyclase. 7 helical membrane-spanning segments follow: residues Phe6–Ile26, Ile30–Asp50, Phe76–Phe96, Val118–Ala138, Tyr146–Gly166, Phe168–Leu188, and Met230–Pro250. Positions Ala248–Gln602 are phytoene synthase.

The protein in the N-terminal section; belongs to the lycopene beta-cyclase family. In the C-terminal section; belongs to the phytoene/squalene synthase family.

Its subcellular location is the membrane. It carries out the reaction all-trans-lycopene = gamma-carotene. The catalysed reaction is gamma-carotene = all-trans-beta-carotene. It catalyses the reaction 2 (2E,6E,10E)-geranylgeranyl diphosphate = 15-cis-phytoene + 2 diphosphate. It participates in carotenoid biosynthesis; beta-carotene biosynthesis. It functions in the pathway carotenoid biosynthesis; phytoene biosynthesis; all-trans-phytoene from geranylgeranyl diphosphate: step 1/1. Bifunctional enzyme that catalyzes the reactions from geranylgeranyl diphosphate to phytoene (phytoene synthase) and from lycopene to beta-carotene via the intermediate gamma-carotene and from 3,4-didehydrolycopene to torulene (lycopene cyclase). Torulene is further processed to the acidic carotenoid neurosporaxanthin. The cyclase preferentially catalyzes single cyclizations at only one end of the substrate to produce monocyclic carotenoids. Neurosporaxanthin is synthesized from geranyl-geranyl pyrophosphate (GGPP) through several enzymatic activities. Phytoene synthase activity performed by the bifunctional enzyme al-2 first produces phytoene from geranyl-geranyl pyrophosphate (GGPP). The phytoene dehydrogenase al-1 then introduces 5 desaturations to lead to 3,4-didehydrolycopene via the intermediates phytofluene, zeta-carotene, neurosporene and lycopene. Al-2 cyclase activity then converts 3,4-didehydrolycopene into torulene. Al-2 can also convet lycopene into gamma-carotene which in turn is converted to beta-carotene by an additional al-2 cyclization reaction. Torulene is the substrate of the dioxidase cao-2 that breaks the molecule, removing five carbon atoms to yield beta-apo-4'-carotenal, whereas the aldehyde dehydrogenase ylo-1 mediates the last step by converting beta-apo-4'-carotenal into neurosporaxanthin. The protein is Bifunctional lycopene cyclase/phytoene synthase of Neurospora crassa (strain ATCC 24698 / 74-OR23-1A / CBS 708.71 / DSM 1257 / FGSC 987).